The sequence spans 294 residues: Protoheme IX farnesyltransferase (294 aa).

9 consecutive transmembrane segments (helical) span residues 13-33 (IIFG…KGVI), 35-55 (YPLF…GCVF), 84-104 (ISLI…YAAA), 107-127 (LAMQ…SLYM), 132-152 (VYGT…GYCA), 162-182 (LILL…IAIF), 208-228 (IILY…SGYA), 229-249 (GYKY…MALS), and 264-284 (FIFS…DPHV).

The protein belongs to the UbiA prenyltransferase family. Protoheme IX farnesyltransferase subfamily.

The protein localises to the cell inner membrane. It catalyses the reaction heme b + (2E,6E)-farnesyl diphosphate + H2O = Fe(II)-heme o + diphosphate. It functions in the pathway porphyrin-containing compound metabolism; heme O biosynthesis; heme O from protoheme: step 1/1. In terms of biological role, converts heme B (protoheme IX) to heme O by substitution of the vinyl group on carbon 2 of heme B porphyrin ring with a hydroxyethyl farnesyl side group. This Photorhabdus laumondii subsp. laumondii (strain DSM 15139 / CIP 105565 / TT01) (Photorhabdus luminescens subsp. laumondii) protein is Protoheme IX farnesyltransferase.